We begin with the raw amino-acid sequence, 317 residues long: Adenosine receptor A3 (317 aa).

Over 1–14 the chain is Extracellular; sequence MPVNSTAVSLASVT. Residue Asn4 is glycosylated (N-linked (GlcNAc...) asparagine). Residues 15–37 traverse the membrane as a helical segment; that stretch reads YISVEILIGLCAIVGNVLVIWVV. The Cytoplasmic segment spans residues 38-48; the sequence is KLNPSLQTTTF. The chain crosses the membrane as a helical span at residues 49 to 72; the sequence is YFIVSLALADIAVGVLVMPLAIVI. Residues 73-84 lie on the Extracellular side of the membrane; that stretch reads SLGVTIHFYSCL. A disulfide bond links Cys83 and Cys165. Residues 85-106 form a helical membrane-spanning segment; that stretch reads LMTCLLMIFTHASIMSLLAIAV. Residues 107 to 126 lie on the Cytoplasmic side of the membrane; sequence DRYLRVKLTVRYRRVTTQRR. The chain crosses the membrane as a helical span at residues 127 to 148; sequence IWLALGLCWLVSFLVGLTPMFG. Topologically, residues 149–176 are extracellular; that stretch reads WNMKLSSADKNLTFLPCQFRSVMRMDYM. The helical transmembrane segment at 177 to 197 threads the bilayer; sequence VYFSFFTWILIPLVVMCAIYF. Residues 198 to 230 lie on the Cytoplasmic side of the membrane; the sequence is DIFYVIRNRLSQNFSGSKETGAFYGREFKTAKS. Residues 231 to 254 form a helical membrane-spanning segment; the sequence is LSLVLFLFALSWLPLSIINCIIYF. Topologically, residues 255-260 are extracellular; it reads NGEVPQ. The chain crosses the membrane as a helical span at residues 261 to 283; the sequence is IVLYLGILLSHANSMMNPIVYAY. Over 284–317 the chain is Cytoplasmic; sequence KIKKFKETYLLILKACVICQPSKSMDPSIEQTSE. Cys302 carries S-palmitoyl cysteine lipidation.

It belongs to the G-protein coupled receptor 1 family. In terms of processing, phosphorylation on Thr-315 and Ser-316 may be crucial for rapid desensitization. Phosphorylation on Thr-315 may be necessary for phosphorylation on Ser-316 to occur.

It localises to the cell membrane. Functionally, receptor for adenosine. The activity of this receptor is mediated by G proteins which inhibits adenylyl cyclase. This Bos taurus (Bovine) protein is Adenosine receptor A3 (ADORA3).